Reading from the N-terminus, the 240-residue chain is 1-(5-phosphoribosyl)-5-[(5-phosphoribosylamino)methylideneamino] imidazole-4-carboxamide isomerase (240 aa).

D9 (proton acceptor) is an active-site residue. The active-site Proton donor is the D131.

This sequence belongs to the HisA/HisF family.

Its subcellular location is the cytoplasm. The catalysed reaction is 1-(5-phospho-beta-D-ribosyl)-5-[(5-phospho-beta-D-ribosylamino)methylideneamino]imidazole-4-carboxamide = 5-[(5-phospho-1-deoxy-D-ribulos-1-ylimino)methylamino]-1-(5-phospho-beta-D-ribosyl)imidazole-4-carboxamide. Its pathway is amino-acid biosynthesis; L-histidine biosynthesis; L-histidine from 5-phospho-alpha-D-ribose 1-diphosphate: step 4/9. In Cytophaga hutchinsonii (strain ATCC 33406 / DSM 1761 / CIP 103989 / NBRC 15051 / NCIMB 9469 / D465), this protein is 1-(5-phosphoribosyl)-5-[(5-phosphoribosylamino)methylideneamino] imidazole-4-carboxamide isomerase.